The sequence spans 471 residues: Alkaline phosphatase (471 aa).

The N-terminal stretch at methionine 1 to alanine 21 is a signal peptide. Mg(2+) is bound at residue aspartate 73. Residue aspartate 73 coordinates Zn(2+). Serine 124 (phosphoserine intermediate) is an active-site residue. Mg(2+)-binding residues include aspartate 175 and threonine 177. 2 disulfides stabilise this stretch: cysteine 190-cysteine 200 and cysteine 308-cysteine 358. Glutamate 344 provides a ligand contact to Mg(2+). Residues aspartate 349, histidine 353, aspartate 391, histidine 392, and histidine 434 each contribute to the Zn(2+) site.

The protein belongs to the alkaline phosphatase family. As to quaternary structure, isozymes 1 and 3 are a dimer of identical chains, isozyme 2 is a dimer of heterogeneous chains, one of each of the subunits from isozymes 1 and 3. Mg(2+) serves as cofactor. It depends on Zn(2+) as a cofactor.

The protein localises to the periplasm. The enzyme catalyses a phosphate monoester + H2O = an alcohol + phosphate. This Escherichia coli (strain K12) protein is Alkaline phosphatase (phoA).